The following is a 424-amino-acid chain: CinA-like protein (424 aa).

Belongs to the CinA family.

The protein is CinA-like protein of Shewanella frigidimarina (strain NCIMB 400).